Consider the following 345-residue polypeptide: NADH-ubiquinone oxidoreductase chain 2 (345 aa).

The next 9 membrane-spanning stretches (helical) occupy residues 1–21 (MNPIINFILLSSMIAGTVLTM), 60–80 (FLIQAASSALMLFAGIINAHL), 110–130 (PIHFWLPEILQGVPMLTALII), 149–169 (IPTPMTLTMGFLSVIIGGLGG), 179–196 (MAFSSIAHLGWMIVIITI), 200–222 (LTLFNLVLYITFTSSTMLIMHLT), 240–260 (TANLFLLSLLSLGGLPPLSGF), 274–294 (NLVPLATTMAITTLFSLMFYL), and 323–343 (TTMLSMFSLATLFLLPITPTM).

The protein belongs to the complex I subunit 2 family.

It is found in the mitochondrion inner membrane. It carries out the reaction a ubiquinone + NADH + 5 H(+)(in) = a ubiquinol + NAD(+) + 4 H(+)(out). Core subunit of the mitochondrial membrane respiratory chain NADH dehydrogenase (Complex I) that is believed to belong to the minimal assembly required for catalysis. Complex I functions in the transfer of electrons from NADH to the respiratory chain. The immediate electron acceptor for the enzyme is believed to be ubiquinone. The polypeptide is NADH-ubiquinone oxidoreductase chain 2 (MT-ND2) (Varanus melinus (Quince monitor lizard)).